A 394-amino-acid chain; its full sequence is 12-oxophytodienoate reductase 7 (394 aa).

FMN-binding positions include 35 to 37 and Gln-110; that span reads PMT. 189-192 contributes to the substrate binding site; it reads HGAH. The Proton donor role is filled by Tyr-194. Arg-241 contacts FMN. Arg-286 lines the substrate pocket. Residues Gly-324 and 345-346 contribute to the FMN site; that span reads GR. Residues 392–394 carry the Microbody targeting signal motif; the sequence is SRM.

It belongs to the NADH:flavin oxidoreductase/NADH oxidase family. FMN serves as cofactor.

The protein resides in the peroxisome. The catalysed reaction is (1S,2S)-OPC-8 + NADP(+) = (9S,13S,15Z)-12-oxophyto-10,15-dienoate + NADPH + H(+). Its pathway is lipid metabolism; oxylipin biosynthesis. Functionally, involved in the biosynthesis of jasmonate (JA) and perhaps in biosynthesis or metabolism of other oxylipin signaling moleclules. In vitro, reduces cis(+)-12-oxophytodienoic acid (cis(+)-OPDA) and cis(-)-OPDA to cis(+)-OPC-8:0 and cis(-)-OPC-8:0, respectively. May be required for the spatial and temporal regulation of JA levels during dehiscence of anthers, promoting the stomium degeneration program. Involved in carbohydrate transport underlying normal lodicule function during anthesis. The protein is 12-oxophytodienoate reductase 7 of Oryza sativa subsp. japonica (Rice).